The sequence spans 213 residues: Pyridoxine/pyridoxamine 5'-phosphate oxidase (213 aa).

Substrate contacts are provided by residues 8–11 and K67; that span reads RREY. FMN-binding positions include 62 to 67, 77 to 78, R83, K84, and Q106; these read RIVLLK and FT. Residues Y124, R128, and S132 each contribute to the substrate site. FMN-binding positions include 141 to 142 and W186; that span reads QS. 192–194 provides a ligand contact to substrate; sequence RLH. R196 lines the FMN pocket.

This sequence belongs to the pyridoxamine 5'-phosphate oxidase family. Homodimer. FMN serves as cofactor.

The catalysed reaction is pyridoxamine 5'-phosphate + O2 + H2O = pyridoxal 5'-phosphate + H2O2 + NH4(+). It catalyses the reaction pyridoxine 5'-phosphate + O2 = pyridoxal 5'-phosphate + H2O2. It participates in cofactor metabolism; pyridoxal 5'-phosphate salvage; pyridoxal 5'-phosphate from pyridoxamine 5'-phosphate: step 1/1. Its pathway is cofactor metabolism; pyridoxal 5'-phosphate salvage; pyridoxal 5'-phosphate from pyridoxine 5'-phosphate: step 1/1. Functionally, catalyzes the oxidation of either pyridoxine 5'-phosphate (PNP) or pyridoxamine 5'-phosphate (PMP) into pyridoxal 5'-phosphate (PLP). The polypeptide is Pyridoxine/pyridoxamine 5'-phosphate oxidase (Shewanella sediminis (strain HAW-EB3)).